Consider the following 859-residue polypeptide: Leucine--tRNA ligase (859 aa).

Positions 42–52 (PYPSGRLHMGH) match the 'HIGH' region motif. A 'KMSKS' region motif is present at residues 618–622 (KMSKS). Residue Lys621 coordinates ATP.

The protein belongs to the class-I aminoacyl-tRNA synthetase family.

It is found in the cytoplasm. The enzyme catalyses tRNA(Leu) + L-leucine + ATP = L-leucyl-tRNA(Leu) + AMP + diphosphate. In Shewanella baltica (strain OS155 / ATCC BAA-1091), this protein is Leucine--tRNA ligase.